The chain runs to 147 residues: MRTTYIAKPGEVERKWYVVDATDVPLGRLSSAVASILRGKNKPTFTPNVDTGDYVIVINAEKVALTGRKASNKVYYHHSNHPGGLKARTAGDYREKDPEKLLALSVKGMLPKGTLGRQQAKKLHVYRGADHKHEAQQPEVLDINKLI.

The protein belongs to the universal ribosomal protein uL13 family. In terms of assembly, part of the 50S ribosomal subunit.

In terms of biological role, this protein is one of the early assembly proteins of the 50S ribosomal subunit, although it is not seen to bind rRNA by itself. It is important during the early stages of 50S assembly. This Ligilactobacillus salivarius (strain UCC118) (Lactobacillus salivarius) protein is Large ribosomal subunit protein uL13.